The sequence spans 228 residues: MRLPILIINFKAYREAAGKRAVELAKAAEKVAKELGVSIAVAPNHLELALVAASVDIPVYAQGVDVEKAGAYTAHVALENLREAGAVGVILNHSEAPLKLNDLAKYVEGGKAMGLDVVVCAPDPLTSLAAAALGPHAVAVEPPELIGTGRAVSKYKPETVVKTVELVSAHFPNVAVITGAGIESGEDVEAALRLGTRGVLLASAAVKAKDPYQKIMELAKPLVAAGPP.

9–11 (NFK) serves as a coordination point for substrate. The active-site Electrophile is the H93. E141 functions as the Proton acceptor in the catalytic mechanism. Residues I146, G181, and 202-203 (AS) each bind substrate.

It belongs to the triosephosphate isomerase family. In terms of assembly, homotetramer; dimer of dimers.

Its subcellular location is the cytoplasm. The enzyme catalyses D-glyceraldehyde 3-phosphate = dihydroxyacetone phosphate. The protein operates within carbohydrate biosynthesis; gluconeogenesis. It functions in the pathway carbohydrate degradation; glycolysis; D-glyceraldehyde 3-phosphate from glycerone phosphate: step 1/1. Its function is as follows. Involved in the gluconeogenesis. Catalyzes stereospecifically the conversion of dihydroxyacetone phosphate (DHAP) to D-glyceraldehyde-3-phosphate (G3P). This chain is Triosephosphate isomerase, found in Pyrobaculum calidifontis (strain DSM 21063 / JCM 11548 / VA1).